The chain runs to 480 residues: Type II methyltransferase M.NspV (480 aa).

The protein belongs to the methyltransferase superfamily.

Its function is as follows. A gamma subtype methylase that recognizes the double-stranded sequence 5'-TTCGAA-3', and methylates it on an unknown base to protect it against the NspV endonuclease. The chain is Type II methyltransferase M.NspV from Nostoc sp. (strain ATCC 29411 / PCC 7524).